Here is a 509-residue protein sequence, read N- to C-terminus: Steroid 17-alpha-hydroxylase/17,20 lyase (509 aa).

N202 contributes to the substrate binding site. C442 serves as a coordination point for heme.

This sequence belongs to the cytochrome P450 family. The cofactor is heme.

It is found in the endoplasmic reticulum membrane. It localises to the microsome membrane. The catalysed reaction is a C21-steroid + reduced [NADPH--hemoprotein reductase] + O2 = a 17alpha-hydroxy-C21-steroid + oxidized [NADPH--hemoprotein reductase] + H2O + H(+). It catalyses the reaction progesterone + reduced [NADPH--hemoprotein reductase] + O2 = 17alpha-hydroxyprogesterone + oxidized [NADPH--hemoprotein reductase] + H2O + H(+). The enzyme catalyses pregnenolone + reduced [NADPH--hemoprotein reductase] + O2 = 17alpha-hydroxypregnenolone + oxidized [NADPH--hemoprotein reductase] + H2O + H(+). It carries out the reaction 17alpha-hydroxyprogesterone + reduced [NADPH--hemoprotein reductase] + O2 = androst-4-ene-3,17-dione + acetate + oxidized [NADPH--hemoprotein reductase] + H2O + 2 H(+). The catalysed reaction is 17alpha-hydroxyprogesterone + reduced [NADPH--hemoprotein reductase] + O2 = 16alpha,17alpha-dihydroxyprogesterone + oxidized [NADPH--hemoprotein reductase] + H2O + H(+). It catalyses the reaction 16alpha,17alpha-dihydroxyprogesterone + reduced [NADPH--hemoprotein reductase] + O2 = 6beta,16alpha,17alpha-trihydroxyprogesterone + oxidized [NADPH--hemoprotein reductase] + H2O + H(+). The enzyme catalyses 17alpha-hydroxypregnenolone + reduced [NADPH--hemoprotein reductase] + O2 = 3beta-hydroxyandrost-5-en-17-one + acetate + oxidized [NADPH--hemoprotein reductase] + H2O + 2 H(+). It carries out the reaction 16alpha,17alpha-dihydroxypregnenolone + reduced [NADPH--hemoprotein reductase] + O2 = 3beta,16alpha-dihydroxy-androst-5-en-17-one + acetate + oxidized [NADPH--hemoprotein reductase] + H2O + 2 H(+). The catalysed reaction is 3beta-hydroxyandrost-5-en-17-one + reduced [NADPH--hemoprotein reductase] + O2 = 3beta,16alpha-dihydroxy-androst-5-en-17-one + oxidized [NADPH--hemoprotein reductase] + H2O + H(+). It catalyses the reaction androst-4-ene-3,17-dione + reduced [NADPH--hemoprotein reductase] + O2 = 16alpha-hydroxyandrost-4-ene-3,17-dione + oxidized [NADPH--hemoprotein reductase] + H2O + H(+). It participates in steroid hormone biosynthesis. The protein operates within steroid biosynthesis; glucocorticoid biosynthesis. Regulated predominantly by intracellular cAMP levels. The 17,20-lyase activity is stimulated by cytochrome b5, which acts as an allosteric effector increasing the Vmax of the lyase activity. Functionally, a cytochrome P450 monooxygenase involved in corticoid and androgen biosynthesis. Catalyzes 17-alpha hydroxylation of C21 steroids, which is common for both pathways. A second oxidative step, required only for androgen synthesis, involves an acyl-carbon cleavage. The 17-alpha hydroxy intermediates, as part of adrenal glucocorticoids biosynthesis pathway, are precursors of cortisol. Hydroxylates steroid hormones, pregnenolone and progesterone to form 17-alpha hydroxy metabolites, followed by the cleavage of the C17-C20 bond to form C19 steroids, dehydroepiandrosterone (DHEA) and androstenedione. Has 16-alpha hydroxylase activity. Catalyzes 16-alpha hydroxylation of 17-alpha hydroxy pregnenolone, followed by the cleavage of the C17-C20 bond to form 16-alpha-hydroxy DHEA. Also 16-alpha hydroxylates androgens, relevant for estriol synthesis. Mechanistically, uses molecular oxygen inserting one oxygen atom into a substrate, and reducing the second into a water molecule, with two electrons provided by NADPH via cytochrome P450 reductase (CPR; NADPH-ferrihemoprotein reductase). The polypeptide is Steroid 17-alpha-hydroxylase/17,20 lyase (CYP17A1) (Bison bison (American bison)).